The primary structure comprises 292 residues: Putative phosphatase MPN_381 (292 aa).

Asp11 functions as the Nucleophile in the catalytic mechanism. Mg(2+) is bound at residue Asp11. Leu12 contributes to the phosphate binding site. Asp13 is a binding site for Mg(2+). Residues 60–61 (TG) and Lys217 each bind phosphate. Residue Asp242 coordinates Mg(2+). Asn245 contributes to the phosphate binding site.

Belongs to the HAD-like hydrolase superfamily. Cof family. Requires Mg(2+) as cofactor.

This Mycoplasma pneumoniae (strain ATCC 29342 / M129 / Subtype 1) (Mycoplasmoides pneumoniae) protein is Putative phosphatase MPN_381.